The sequence spans 156 residues: Ribosomal RNA large subunit methyltransferase H (156 aa).

Residues Leu73, Gly104, and 123–128 contribute to the S-adenosyl-L-methionine site; that span reads LSSLTL.

It belongs to the RNA methyltransferase RlmH family. Homodimer.

The protein resides in the cytoplasm. It carries out the reaction pseudouridine(1915) in 23S rRNA + S-adenosyl-L-methionine = N(3)-methylpseudouridine(1915) in 23S rRNA + S-adenosyl-L-homocysteine + H(+). In terms of biological role, specifically methylates the pseudouridine at position 1915 (m3Psi1915) in 23S rRNA. This is Ribosomal RNA large subunit methyltransferase H from Neisseria meningitidis serogroup C (strain 053442).